The chain runs to 707 residues: Ornithine decarboxylase (707 aa).

A disordered region spans residues 83–102; sequence NRNPLSRADSAAGREETAQT. Lysine 288 is subject to N6-(pyridoxal phosphate)lysine. Residues serine 421, glycine 458, and 498 to 501 contribute to the pyridoxal 5'-phosphate site; that span reads EPGR. 561-562 contacts substrate; that stretch reads FD. Cysteine 634 serves as the catalytic Proton donor; shared with dimeric partner. A substrate-binding site is contributed by aspartate 635. Residue tyrosine 663 participates in pyridoxal 5'-phosphate binding.

It belongs to the Orn/Lys/Arg decarboxylase class-II family. In terms of assembly, homodimer. Only the dimer is catalytically active, as the active sites are constructed of residues from both monomers. Requires pyridoxal 5'-phosphate as cofactor.

The catalysed reaction is L-ornithine + H(+) = putrescine + CO2. It participates in amine and polyamine biosynthesis; putrescine biosynthesis via L-ornithine pathway; putrescine from L-ornithine: step 1/1. Inhibited by antizyme (AZ) in response to polyamine levels. AZ inhibits the assembly of the functional homodimer by binding to ODC monomers and targeting them for ubiquitin-independent proteolytic destruction by the 26S proteasome. Inhibited by 1-amino-oxy-3-aminopropane (APA, an isosteric analog of putrescine). Irreversibly inhibited by alpha-difluoromethylornithine (DFMO, a curative agent of West African sleeping sickness). Functionally, catalyzes the first and rate-limiting step of polyamine biosynthesis that converts ornithine into putrescine, which is the precursor for the polyamines, spermidine and spermine. Polyamines are essential for cell proliferation and are implicated in cellular processes, ranging from DNA replication to apoptosis. This chain is Ornithine decarboxylase, found in Leishmania donovani.